The sequence spans 232 residues: RNA chaperone ProQ (232 aa).

The interval 105–182 (EAKARVQAQR…REEQHTPVSD (78 aa)) is disordered. The span at 117-136 (QQAKKREAAATAGEKEDAPR) shows a compositional bias: basic and acidic residues. Positions 137–146 (RERKPRPTTP) are enriched in basic residues. Residues 147–177 (RRKEGAERKPRAQKPVEKAPKTVKAPREEQH) are compositionally biased toward basic and acidic residues.

It belongs to the ProQ family.

The protein resides in the cytoplasm. RNA chaperone with significant RNA binding, RNA strand exchange and RNA duplexing activities. May regulate ProP activity through an RNA-based, post-transcriptional mechanism. This is RNA chaperone ProQ from Escherichia coli (strain K12).